A 339-amino-acid polypeptide reads, in one-letter code: Beta-ketoacyl-[acyl-carrier-protein] synthase III (339 aa).

Residues C121 and H257 contribute to the active site. An ACP-binding region spans residues 258-262 (QANLR). N288 is a catalytic residue.

It belongs to the thiolase-like superfamily. FabH family. Homodimer.

The protein localises to the cytoplasm. The catalysed reaction is malonyl-[ACP] + propanoyl-CoA + H(+) = 3-oxopentanoyl-[ACP] + CO2 + CoA. The enzyme catalyses 2-methylpropanoyl-CoA + malonyl-[ACP] + H(+) = 4-methyl-3-oxopentanoyl-[ACP] + CO2 + CoA. It catalyses the reaction malonyl-[ACP] + acetyl-CoA + H(+) = 3-oxobutanoyl-[ACP] + CO2 + CoA. It carries out the reaction butanoyl-CoA + malonyl-[ACP] + H(+) = 3-oxohexanoyl-[ACP] + CO2 + CoA. It participates in lipid metabolism; fatty acid biosynthesis. Functionally, catalyzes the condensation reaction of fatty acid synthesis by the addition to an acyl acceptor of two carbons from malonyl-ACP. Catalyzes the first condensation reaction which initiates fatty acid synthesis and may therefore play a role in governing the total rate of fatty acid production. Possesses both acetoacetyl-ACP synthase and acetyl transacylase activities. Propionyl-CoA and isobutyryl-CoA were the two most preferred substrates, although acetyl-CoA and butyryl-CoA could also be accepted and elongated. Involved in the biosynthesis of R1128 polyketide. This Streptomyces lividans protein is Beta-ketoacyl-[acyl-carrier-protein] synthase III.